Here is a 226-residue protein sequence, read N- to C-terminus: ATP synthase F(0) complex subunit a (226 aa).

A run of 6 helical transmembrane segments spans residues 6-26 (FATFITPTILGITTLPIIMLF), 68-88 (WALMLMSLILFIASTNLLGLL), 97-117 (QLSMNIGMAIPLWLATVLMGF), 138-158 (VPMLIIIETISLFIQPVALAV), 164-184 (ITAGHLLIHLIGSATLALCSI), and 193-213 (FIILFLLTILELAVAMIQAYV).

It belongs to the ATPase A chain family. Component of the ATP synthase complex composed at least of ATP5F1A/subunit alpha, ATP5F1B/subunit beta, ATP5MC1/subunit c (homooctomer), MT-ATP6/subunit a, MT-ATP8/subunit 8, ATP5ME/subunit e, ATP5MF/subunit f, ATP5MG/subunit g, ATP5MK/subunit k, ATP5MJ/subunit j, ATP5F1C/subunit gamma, ATP5F1D/subunit delta, ATP5F1E/subunit epsilon, ATP5PF/subunit F6, ATP5PB/subunit b, ATP5PD/subunit d, ATP5PO/subunit OSCP. ATP synthase complex consists of a soluble F(1) head domain (subunits alpha(3) and beta(3)) - the catalytic core - and a membrane F(0) domain - the membrane proton channel (subunits c, a, 8, e, f, g, k and j). These two domains are linked by a central stalk (subunits gamma, delta, and epsilon) rotating inside the F1 region and a stationary peripheral stalk (subunits F6, b, d, and OSCP). Interacts with DNAJC30; interaction is direct.

The protein localises to the mitochondrion inner membrane. It catalyses the reaction H(+)(in) = H(+)(out). In terms of biological role, subunit a, of the mitochondrial membrane ATP synthase complex (F(1)F(0) ATP synthase or Complex V) that produces ATP from ADP in the presence of a proton gradient across the membrane which is generated by electron transport complexes of the respiratory chain. ATP synthase complex consist of a soluble F(1) head domain - the catalytic core - and a membrane F(1) domain - the membrane proton channel. These two domains are linked by a central stalk rotating inside the F(1) region and a stationary peripheral stalk. During catalysis, ATP synthesis in the catalytic domain of F(1) is coupled via a rotary mechanism of the central stalk subunits to proton translocation. With the subunit c (ATP5MC1), forms the proton-conducting channel in the F(0) domain, that contains two crucial half-channels (inlet and outlet) that facilitate proton movement from the mitochondrial intermembrane space (IMS) into the matrix. Protons are taken up via the inlet half-channel and released through the outlet half-channel, following a Grotthuss mechanism. The chain is ATP synthase F(0) complex subunit a from Osphranter robustus (Wallaroo).